The following is a 402-amino-acid chain: Palmitoyltransferase PFA4 (402 aa).

The Cytoplasmic portion of the chain corresponds to 1 to 8; sequence MAVQLKWP. Residues 9–29 traverse the membrane as a helical segment; it reads IIGVVIPCVLIAMVAYGSHYF. The Lumenal portion of the chain corresponds to 30–39; that stretch reads VFRTNLSRTE. Residues 40–60 form a helical membrane-spanning segment; it reads QILYEVYVCIVWLSYYLAIVV. Topologically, residues 61–125 are cytoplasmic; that stretch reads DPGSPPKNFT…GHNNLPHFLR (65 aa). The region spanning 78 to 128 is the DHHC domain; sequence RWCKKCQNYKPERSHHCKTCNKCVLKMDHHCPWTYNCVGHNNLPHFLRFVF. The active-site S-palmitoyl cysteine intermediate is Cys-108. The helical transmembrane segment at 126–146 threads the bilayer; that stretch reads FVFFLIVGMTYVLFQLGKQVL. Topologically, residues 147 to 165 are lumenal; the sequence is HYYDSSKLPSYLIDKKEMC. Residues 166-186 traverse the membrane as a helical segment; it reads AVIFLLPVTFFVFVSIIILFV. Over 187–402 the chain is Cytoplasmic; the sequence is RCMINLLFRG…LVSKDEISNN (216 aa).

It belongs to the DHHC palmitoyltransferase family. PFA4 subfamily.

The protein localises to the endoplasmic reticulum membrane. It carries out the reaction L-cysteinyl-[protein] + hexadecanoyl-CoA = S-hexadecanoyl-L-cysteinyl-[protein] + CoA. Functionally, mediates the reversible addition of palmitate to target proteins, thereby regulating their membrane association and biological function. The protein is Palmitoyltransferase PFA4 of Debaryomyces hansenii (strain ATCC 36239 / CBS 767 / BCRC 21394 / JCM 1990 / NBRC 0083 / IGC 2968) (Yeast).